A 431-amino-acid polypeptide reads, in one-letter code: Trigger factor (431 aa).

The region spanning 158–243 is the PPIase FKBP-type domain; that stretch reads GHLVALETWS…VIEVSEPVLL (86 aa).

Belongs to the FKBP-type PPIase family. Tig subfamily.

It localises to the cytoplasm. The enzyme catalyses [protein]-peptidylproline (omega=180) = [protein]-peptidylproline (omega=0). In terms of biological role, involved in protein export. Acts as a chaperone by maintaining the newly synthesized protein in an open conformation. Functions as a peptidyl-prolyl cis-trans isomerase. This Xylella fastidiosa (strain 9a5c) protein is Trigger factor (tig).